Reading from the N-terminus, the 227-residue chain is MAYPMQLGFQDATSPIMEELLHFHDHTLMIVFLISSLVLYVISLMLTTKLTHTSTMDAQEVETIWTILPAIILILIALPSLRILYMMDEINNPSLTVKTMGHQWYWSYEYTDYEDLSFDSYMIPTSELKPGELRLLEVDNRVVLPMEMTIRMLVSSEDVLHSWAVPSLGLKTDAIPGRLNQTTLMSTRPGLYYGQCSEICGSNHSFMPIVLELVPLNYFEKWSASML.

The Mitochondrial intermembrane segment spans residues 1–14 (MAYPMQLGFQDATS). Residues 15 to 45 (PIMEELLHFHDHTLMIVFLISSLVLYVISLM) form a helical membrane-spanning segment. Over 46 to 59 (LTTKLTHTSTMDAQ) the chain is Mitochondrial matrix. Residues 60 to 87 (EVETIWTILPAIILILIALPSLRILYMM) traverse the membrane as a helical segment. Residues 88 to 227 (DEINNPSLTV…YFEKWSASML (140 aa)) lie on the Mitochondrial intermembrane side of the membrane. Residues H161, C196, E198, C200, H204, and M207 each coordinate Cu cation. Mg(2+) is bound at residue E198. A Phosphotyrosine modification is found at Y218.

Belongs to the cytochrome c oxidase subunit 2 family. As to quaternary structure, component of the cytochrome c oxidase (complex IV, CIV), a multisubunit enzyme composed of 14 subunits. The complex is composed of a catalytic core of 3 subunits MT-CO1, MT-CO2 and MT-CO3, encoded in the mitochondrial DNA, and 11 supernumerary subunits COX4I, COX5A, COX5B, COX6A, COX6B, COX6C, COX7A, COX7B, COX7C, COX8 and NDUFA4, which are encoded in the nuclear genome. The complex exists as a monomer or a dimer and forms supercomplexes (SCs) in the inner mitochondrial membrane with NADH-ubiquinone oxidoreductase (complex I, CI) and ubiquinol-cytochrome c oxidoreductase (cytochrome b-c1 complex, complex III, CIII), resulting in different assemblies (supercomplex SCI(1)III(2)IV(1) and megacomplex MCI(2)III(2)IV(2)). Found in a complex with TMEM177, COA6, COX18, COX20, SCO1 and SCO2. Interacts with TMEM177 in a COX20-dependent manner. Interacts with COX20. Interacts with COX16. Cu cation serves as cofactor.

It localises to the mitochondrion inner membrane. It carries out the reaction 4 Fe(II)-[cytochrome c] + O2 + 8 H(+)(in) = 4 Fe(III)-[cytochrome c] + 2 H2O + 4 H(+)(out). Component of the cytochrome c oxidase, the last enzyme in the mitochondrial electron transport chain which drives oxidative phosphorylation. The respiratory chain contains 3 multisubunit complexes succinate dehydrogenase (complex II, CII), ubiquinol-cytochrome c oxidoreductase (cytochrome b-c1 complex, complex III, CIII) and cytochrome c oxidase (complex IV, CIV), that cooperate to transfer electrons derived from NADH and succinate to molecular oxygen, creating an electrochemical gradient over the inner membrane that drives transmembrane transport and the ATP synthase. Cytochrome c oxidase is the component of the respiratory chain that catalyzes the reduction of oxygen to water. Electrons originating from reduced cytochrome c in the intermembrane space (IMS) are transferred via the dinuclear copper A center (CU(A)) of subunit 2 and heme A of subunit 1 to the active site in subunit 1, a binuclear center (BNC) formed by heme A3 and copper B (CU(B)). The BNC reduces molecular oxygen to 2 water molecules using 4 electrons from cytochrome c in the IMS and 4 protons from the mitochondrial matrix. The protein is Cytochrome c oxidase subunit 2 (MT-CO2) of Rusa unicolor (Sambar).